The chain runs to 582 residues: Ubiquilin-1 (582 aa).

Disordered regions lie at residues 1–26 and 102–136; these read MAES…AEPK and RPQD…AANS. The residue at position 2 (Ala-2) is an N-acetylalanine. The Ubiquitin-like domain maps to 28–102; sequence MKVTVKTPKE…VHLVIKTQNR (75 aa). Residues 102–135 show a composition bias toward polar residues; that stretch reads RPQDNSAQQTNTTGNSVTSSPAPDSNPTSGPAAN. The segment at 169–422 is interaction with UBXN4; it reads QLLSNPEMMV…LNNPLFAGNP (254 aa). 2 STI1 domains span residues 173-201 and 203-242; these read NPEM…QLIM and NPQM…MQEM. Positions 285–365 are disordered; that stretch reads NPFASLVSSP…NLVPGAGASM (81 aa). Over residues 290-304 the composition is skewed to polar residues; sequence LVSSPSSAEGTQPSR. Residues 318 to 346 show a composition bias toward low complexity; the sequence is QTPQSSPASGSTGSTTNTVSTSAGNATST. STI1 domains lie at 381–428 and 432–464; these read NPQL…QEQM and LPTF…QQGL. The segment at 481–513 is disordered; the sequence is GLAAGNSGGPAGTTAPSTAPGEDTNPQGGAAEP. One can recognise a UBA domain in the interval 539-579; it reads RFQQQLEQLSAMGFLNREANLQALIATGGDINAAIERLLGS.

As to quaternary structure, monomer and homodimer. Heterodimer with UBQLN2. Binds CD47. Binds NBL1. Binds GABRA1, GABRA2, GABRA3, GABRA6, GABRB1, GABRB2 and GABRB3. Binds UBE3A, BTRC, P4HB and MTOR. Interacts with the proteasome 19S subunit. Interacts (via ubiquitin-like domain) with TREX1; the interaction is direct and may control TREX1 subcellular location. Forms a complex with UBXN4 and VCP. Interacts (via UBA domain) with UBQLN4 (via ubiquitin-like domain). Found in a complex with UBQLN2 and MAP1LC3A/B/C. The monomeric form interacts with PSEN1 and PSEN2. Interacts with ORAI1. Interacts (via UBA domain) with TICAM1. Interacts with EPS15. Interacts (via UBA domain) with UBA52 and (via ubiquitin-like domain) with PSMD3 and PSMD4. Interacts with HERPUD1. Interacts with MAP1LC3A/B/C in the presence of UBQLN4. Interacts (via ubiquitin-like domain) with EPS15 (via UIM domains) and both the ubiquitinated and non-ubiquitinated forms can interact with EPS15. Interacts (via ubiquitin-like domain) with EPS15L1, HGS (via UIM domain) and STAM2 (via UIM domain). Interacts with BCL2L10/BCL-B; in the cytoplasm. In terms of processing, degraded during both macroautophagy and during chaperone-mediated autophagy (CMA). Post-translationally, phosphorylated. Ubiquitinated.

It is found in the nucleus. The protein resides in the cytoplasm. Its subcellular location is the endoplasmic reticulum. The protein localises to the cytoplasmic vesicle. It localises to the autophagosome. It is found in the cell membrane. Plays an important role in the regulation of different protein degradation mechanisms and pathways including ubiquitin-proteasome system (UPS), autophagy and endoplasmic reticulum-associated protein degradation (ERAD) pathway. Mediates the proteasomal targeting of misfolded or accumulated proteins for degradation by binding (via UBA domain) to their polyubiquitin chains and by interacting (via ubiquitin-like domain) with the subunits of the proteasome. Plays a role in the ERAD pathway via its interaction with ER-localized proteins UBXN4, VCP and HERPUD1 and may form a link between the polyubiquitinated ERAD substrates and the proteasome. Plays a role in unfolded protein response (UPR) by attenuating the induction of UPR-inducible genes, DDTI3/CHOP, HSPA5 and PDIA2 during ER stress. Involved in the regulation of macroautophagy and autophagosome formation; required for maturation of autophagy-related protein LC3 from the cytosolic form LC3-I to the membrane-bound form LC3-II and may assist in the maturation of autophagosomes to autolysosomes by mediating autophagosome-lysosome fusion. Negatively regulates the TICAM1/TRIF-dependent toll-like receptor signaling pathway by decreasing the abundance of TICAM1 via the autophagic pathway. Promotes the ubiquitination and lysosomal degradation of ORAI1, consequently down-regulating the ORAI1-mediated Ca2+ mobilization. Suppresses the maturation and proteasomal degradation of amyloid beta A4 protein (A4) by stimulating the lysine 63 (K63)-linked polyubiquitination. Delays the maturation of A4 by sequestering it in the Golgi apparatus and preventing its transport to the cell surface for subsequent processing. Promotes the surface expression of GABA-A receptors. Ubiquitinates BCL2L10 and thereby stabilizes protein abundance. The polypeptide is Ubiquilin-1 (Ubqln1) (Rattus norvegicus (Rat)).